The sequence spans 1002 residues: Leucine-rich repeat receptor-like serine/threonine-protein kinase BAM2 (1002 aa).

Residues 1-22 form the signal peptide; it reads MKLLLLLLLLLLLHISHSFTVA. Residues 23–636 lie on the Extracellular side of the membrane; it reads KPITELHALL…SHVKPLSATT (614 aa). N-linked (GlcNAc...) asparagine glycans are attached at residues N51, N80, N97, N123, N130, N153, and N164. 22 LRR repeats span residues 68-92, 93-116, 118-140, 141-165, 167-188, 189-213, 215-238, 239-262, 263-285, 286-309, 311-334, 335-358, 359-382, 384-406, 407-430, 431-456, 458-479, 480-503, 505-527, 528-551, 552-575, and 577-600; these read LRHV…VAHL, PLLQ…ISNL, ELRH…LSSG, LVNL…LTNL, QLRH…TYGT, WPVL…IGNL, TLRE…IGNL, SELV…IGKL, QKLD…ELGL, ISSL…SFSQ, KNLT…IGEM, PELE…LGEN, GRLV…MCSG, RLMT…LGKC, ESLT…LFGL, PKLS…GVSG, LGQI…IGNL, SGVQ…IGRL, QLSK…ISRC, KLLT…LTGM, KILN…IASM, and SLTS…QFSY. N-linked (GlcNAc...) asparagine glycans are attached at residues N212 and N237. N312 and N346 each carry an N-linked (GlcNAc...) asparagine glycan. N420 carries N-linked (GlcNAc...) asparagine glycosylation. The N-linked (GlcNAc...) asparagine glycan is linked to N478. N-linked (GlcNAc...) asparagine glycans are attached at residues N558, N587, and N602. A helical transmembrane segment spans residues 637-657; that stretch reads KLLLVLGLLFCSMVFAIVAII. At 658–1002 the chain is on the cytoplasmic side; the sequence is KARSLRNASE…SGSPPDLLSN (345 aa). T682 is modified (phosphothreonine). Residues 690-967 form the Protein kinase domain; the sequence is LKEDNIIGKG…VQILTEIPKI (278 aa). Residues 696–704 and K718 each bind ATP; that span reads IGKGGAGIV. Residues Y765 and Y803 each carry the phosphotyrosine modification. The Proton acceptor role is filled by D816. The residue at position 851 (S851) is a Phosphoserine. Phosphotyrosine is present on residues Y859 and Y866. A Phosphothreonine modification is found at T867. Residues 969–1002 form a disordered region; that stretch reads LSKQQAAESDVTEKAPAINESSPDSGSPPDLLSN. Low complexity predominate over residues 989-1002; the sequence is SSPDSGSPPDLLSN.

It belongs to the protein kinase superfamily. Ser/Thr protein kinase family. In terms of assembly, interacts with BAM1 and CLV1. Binds to the CLV3, CLE11, CLE18, CLE19, CLE22, CLE25, CLE26, CLE40, CLE41 and CLE42 mature peptides, probably via its extracellular leucine-rich repeat region. As to expression, expressed in seedlings, roots, rosette leaves, stems, inflorescences, flowers and siliques.

Its subcellular location is the cell membrane. The catalysed reaction is L-seryl-[protein] + ATP = O-phospho-L-seryl-[protein] + ADP + H(+). It carries out the reaction L-threonyl-[protein] + ATP = O-phospho-L-threonyl-[protein] + ADP + H(+). Functionally, necessary for male gametophyte development, as well as ovule specification and function. Involved in cell-cell communication process required during early anther development, and regulating cell division and differentiation to organize cell layers. Required for the development of high-ordered vascular strands within the leaf and a correlated control of leaf shape, size and symmetry. May regulate the CLV1-dependent CLV3-mediated signaling in meristems maintenance. The chain is Leucine-rich repeat receptor-like serine/threonine-protein kinase BAM2 (BAM2) from Arabidopsis thaliana (Mouse-ear cress).